Here is a 252-residue protein sequence, read N- to C-terminus: Iron-sulfur cluster co-chaperone protein HscB homolog (252 aa).

Residues 1–59 (MKKTKTMVASISTLIRRTYPSTNQCNSLATIQSQTQLPRESLQHHSSAEGRLRFSGRVF) constitute a mitochondrion transit peptide. One can recognise a J domain in the interval 93–165 (DYFQIFGLEK…LSRAMYIMKL (73 aa)).

This sequence belongs to the HscB family. As to quaternary structure, interacts with ISU1 and HSP70-9/HSCA1.

It is found in the mitochondrion. It localises to the cytoplasm. The protein resides in the cytosol. In terms of biological role, co-chaperone required for the assembly of iron-sulfur [Fe-S] clusters in both mitochondria and cytosol. Required for the activity of iron-sulfur proteins such as aconitase and succinate dehydrogenase. Involved in iron homeostasis and may take part in the control of iron translocation from roots to shoots. This Arabidopsis thaliana (Mouse-ear cress) protein is Iron-sulfur cluster co-chaperone protein HscB homolog.